The chain runs to 347 residues: Holliday junction branch migration complex subunit RuvB (347 aa).

The tract at residues 4 to 186 (INEYGSERIV…FGMIFEMNFY (183 aa)) is large ATPase domain (RuvB-L). Residues leucine 25, arginine 26, glycine 67, lysine 70, threonine 71, threonine 72, 133-135 (EDF), arginine 176, tyrosine 186, and arginine 223 each bind ATP. Threonine 71 contacts Mg(2+). The small ATPAse domain (RuvB-S) stretch occupies residues 187–257 (TQEELKMIIT…IVEEVMRLLG (71 aa)). The segment at 260–347 (EFGLDEMDRK…GLFDGFGNIE (88 aa)) is head domain (RuvB-H). Residues arginine 315 and arginine 320 each coordinate DNA.

This sequence belongs to the RuvB family. Homohexamer. Forms an RuvA(8)-RuvB(12)-Holliday junction (HJ) complex. HJ DNA is sandwiched between 2 RuvA tetramers; dsDNA enters through RuvA and exits via RuvB. An RuvB hexamer assembles on each DNA strand where it exits the tetramer. Each RuvB hexamer is contacted by two RuvA subunits (via domain III) on 2 adjacent RuvB subunits; this complex drives branch migration. In the full resolvosome a probable DNA-RuvA(4)-RuvB(12)-RuvC(2) complex forms which resolves the HJ.

The protein resides in the cytoplasm. The enzyme catalyses ATP + H2O = ADP + phosphate + H(+). The RuvA-RuvB-RuvC complex processes Holliday junction (HJ) DNA during genetic recombination and DNA repair, while the RuvA-RuvB complex plays an important role in the rescue of blocked DNA replication forks via replication fork reversal (RFR). RuvA specifically binds to HJ cruciform DNA, conferring on it an open structure. The RuvB hexamer acts as an ATP-dependent pump, pulling dsDNA into and through the RuvAB complex. RuvB forms 2 homohexamers on either side of HJ DNA bound by 1 or 2 RuvA tetramers; 4 subunits per hexamer contact DNA at a time. Coordinated motions by a converter formed by DNA-disengaged RuvB subunits stimulates ATP hydrolysis and nucleotide exchange. Immobilization of the converter enables RuvB to convert the ATP-contained energy into a lever motion, pulling 2 nucleotides of DNA out of the RuvA tetramer per ATP hydrolyzed, thus driving DNA branch migration. The RuvB motors rotate together with the DNA substrate, which together with the progressing nucleotide cycle form the mechanistic basis for DNA recombination by continuous HJ branch migration. Branch migration allows RuvC to scan DNA until it finds its consensus sequence, where it cleaves and resolves cruciform DNA. The protein is Holliday junction branch migration complex subunit RuvB of Fervidobacterium nodosum (strain ATCC 35602 / DSM 5306 / Rt17-B1).